A 256-amino-acid polypeptide reads, in one-letter code: Pimeloyl-[acyl-carrier protein] methyl ester esterase (256 aa).

An AB hydrolase-1 domain is found at 15–242 (HLVLLHGWGL…AAHAPFISHP (228 aa)). Substrate contacts are provided by residues tryptophan 22, 82–83 (SL), and 143–147 (FLALQ). Serine 82 (nucleophile) is an active-site residue. Active-site residues include aspartate 207 and histidine 235. Residue histidine 235 participates in substrate binding.

It belongs to the AB hydrolase superfamily. Carboxylesterase BioH family. In terms of assembly, monomer.

It is found in the cytoplasm. The enzyme catalyses 6-carboxyhexanoyl-[ACP] methyl ester + H2O = 6-carboxyhexanoyl-[ACP] + methanol + H(+). The protein operates within cofactor biosynthesis; biotin biosynthesis. In terms of biological role, the physiological role of BioH is to remove the methyl group introduced by BioC when the pimeloyl moiety is complete. It allows to synthesize pimeloyl-ACP via the fatty acid synthetic pathway through the hydrolysis of the ester bonds of pimeloyl-ACP esters. This Escherichia coli O157:H7 protein is Pimeloyl-[acyl-carrier protein] methyl ester esterase.